Consider the following 117-residue polypeptide: Large ribosomal subunit protein uL18 (117 aa).

The protein belongs to the universal ribosomal protein uL18 family. As to quaternary structure, part of the 50S ribosomal subunit; part of the 5S rRNA/L5/L18/L25 subcomplex. Contacts the 5S and 23S rRNAs.

Functionally, this is one of the proteins that bind and probably mediate the attachment of the 5S RNA into the large ribosomal subunit, where it forms part of the central protuberance. This chain is Large ribosomal subunit protein uL18, found in Thiobacillus denitrificans (strain ATCC 25259 / T1).